The primary structure comprises 151 residues: Kinetoplast-associated protein 1 (151 aa).

A propeptide spanning residues 1-9 is cleaved from the precursor; sequence MLRVSVRSL. The interval 13 to 151 is disordered; the sequence is ASSKAGSKAA…KKGAAKKAHK (139 aa). Low complexity-rich tracts occupy residues 15 to 49, 70 to 91, and 101 to 111; these read SKAG…VPPV, AAAA…TPAK, and SKPSAPKQAAG. Over residues 112–151 the composition is skewed to basic residues; the sequence is KMRKAAGKAQRKIKAAARKAAPKKMAKSFGKKGAAKKAHK.

The protein belongs to the KAP family. Associates with the kinetoplast DNA network.

It localises to the mitochondrion matrix. The protein resides in the kinetoplast. Histone H1-like DNA-binding protein involved in the organization and segregation of kinetoplast DNA (kDNA). The mitochondrial DNA of kinetoplastid protozoa consists of about 5,000 minicircles and 20 to 30 maxicircles. These circular DNAs are held together by catenation into a highly organized compact disk structure referred to as a kinetoplast DNA (kDNA) network. Binds preferentially to a specific fragment of minicircle DNA and is able to compact kDNA networks through DNA charge neutralization and condensation. This Crithidia fasciculata protein is Kinetoplast-associated protein 1 (KAP4).